The chain runs to 431 residues: Serine hydroxymethyltransferase 1 (431 aa).

(6S)-5,6,7,8-tetrahydrofolate is bound by residues Leu127 and 131–133; that span reads GHL. Lys236 bears the N6-(pyridoxal phosphate)lysine mark. Glu252 contributes to the (6S)-5,6,7,8-tetrahydrofolate binding site.

This sequence belongs to the SHMT family. As to quaternary structure, homodimer. It depends on pyridoxal 5'-phosphate as a cofactor.

It localises to the cytoplasm. The catalysed reaction is (6R)-5,10-methylene-5,6,7,8-tetrahydrofolate + glycine + H2O = (6S)-5,6,7,8-tetrahydrofolate + L-serine. It functions in the pathway one-carbon metabolism; tetrahydrofolate interconversion. The protein operates within amino-acid biosynthesis; glycine biosynthesis; glycine from L-serine: step 1/1. In terms of biological role, catalyzes the reversible interconversion of serine and glycine with tetrahydrofolate (THF) serving as the one-carbon carrier. This reaction serves as the major source of one-carbon groups required for the biosynthesis of purines, thymidylate, methionine, and other important biomolecules. Also exhibits THF-independent aldolase activity toward beta-hydroxyamino acids, producing glycine and aldehydes, via a retro-aldol mechanism. The polypeptide is Serine hydroxymethyltransferase 1 (Rhizobium meliloti (strain 1021) (Ensifer meliloti)).